A 521-amino-acid polypeptide reads, in one-letter code: tRNA (adenine(58)-N(1))-methyltransferase non-catalytic subunit trm6 (521 aa).

3 disordered regions span residues 1-24, 305-336, and 452-521; these read METE…NNNN, IYDK…AKTI, and QKST…KIDE. Low complexity predominate over residues 12–24; it reads KSTTSNTNDNNNN. The span at 308–334 shows a compositional bias: basic and acidic residues; it reads KQVKEKEKEKEKDENVKDEKESGEEAK. 2 stretches are compositionally biased toward low complexity: residues 452–476 and 487–502; these read QKST…TKTT and DATT…AATT. The segment covering 510–521 has biased composition (basic and acidic residues); the sequence is SESALKKRKIDE.

Belongs to the TRM6/GCD10 family. In terms of assembly, heterotetramer; composed of two copies of trmt6 and two copies of trmt61a.

The protein localises to the nucleus. Its function is as follows. Substrate-binding subunit of tRNA (adenine-N(1)-)-methyltransferase, which catalyzes the formation of N(1)-methyladenine at position 58 (m1A58) in initiator methionyl-tRNA. The protein is tRNA (adenine(58)-N(1))-methyltransferase non-catalytic subunit trm6 (trmt6) of Dictyostelium discoideum (Social amoeba).